Here is a 452-residue protein sequence, read N- to C-terminus: DNA primase DnaG (452 aa).

Positions 172 to 248 (DTVIIVEGRA…DIDYIARAPP (77 aa)) constitute a Toprim domain. The Mg(2+) site is built by E178, D222, and D224. The tract at residues 289 to 320 (KKQIEQAQVQPSAAPTSPQPQPESTQPTQPIQ) is disordered. Positions 294–320 (QAQVQPSAAPTSPQPQPESTQPTQPIQ) are enriched in low complexity.

The protein belongs to the archaeal DnaG primase family. In terms of assembly, forms a ternary complex with MCM helicase and DNA. Component of the archaeal exosome complex. Requires Mg(2+) as cofactor.

The catalysed reaction is ssDNA + n NTP = ssDNA/pppN(pN)n-1 hybrid + (n-1) diphosphate.. RNA polymerase that catalyzes the synthesis of short RNA molecules used as primers for DNA polymerase during DNA replication. Also part of the exosome, which is a complex involved in RNA degradation. Acts as a poly(A)-binding protein that enhances the interaction between heteromeric, adenine-rich transcripts and the exosome. The sequence is that of DNA primase DnaG from Caldivirga maquilingensis (strain ATCC 700844 / DSM 13496 / JCM 10307 / IC-167).